The primary structure comprises 538 residues: Putative cysteine ligase BshC (538 aa).

Positions 248-268 (ISKYKEVQEGLRNQQEVIKEL) form a coiled coil.

This sequence belongs to the BshC family.

Involved in bacillithiol (BSH) biosynthesis. May catalyze the last step of the pathway, the addition of cysteine to glucosamine malate (GlcN-Mal) to generate BSH. The polypeptide is Putative cysteine ligase BshC (Bacillus cereus (strain G9842)).